A 1140-amino-acid polypeptide reads, in one-letter code: Probable DNA-directed RNA polymerase II subunit RPB2 homolog (1140 aa).

Position 773 (Asp-773) interacts with Mg(2+). The Zn(2+) site is built by Cys-1092, Cys-1095, Cys-1105, and Cys-1108. Residues 1092 to 1108 (CKDCGMMSSTSKKCHHC) form a C4-type zinc finger.

This sequence belongs to the RNA polymerase beta chain family.

The enzyme catalyses RNA(n) + a ribonucleoside 5'-triphosphate = RNA(n+1) + diphosphate. Functionally, component of the DNA-dependent RNA polymerase that catalyzes the transcription of DNA into RNA using the four ribonucleoside triphosphates as substrates. Second largest component of RNA polymerase II which synthesizes mRNA precursors and many functional non-coding RNAs. Proposed to contribute to the polymerase catalytic activity and forms the polymerase active center together with the largest subunit. The polypeptide is Probable DNA-directed RNA polymerase II subunit RPB2 homolog (Invertebrate iridescent virus 3 (IIV-3)).